Consider the following 373-residue polypeptide: Glutamine synthetase (373 aa).

One can recognise a GS beta-grasp domain in the interval 24–106 (EKVQAMYIWI…VLCEVFKYNR (83 aa)). Residues 113-373 (LRHTCRRIMD…TGDEPFEYKN (261 aa)) enclose the GS catalytic domain. An ATP-binding site is contributed by Glu134. Mn(2+)-binding residues include Glu134, Glu136, Glu196, and Glu203. 203-208 (EFQVGP) is an ATP binding site. Position 246-247 (246-247 (NW)) interacts with L-glutamate. His253 provides a ligand contact to Mn(2+). Residues 255 to 257 (NFS), Arg319, and Arg324 contribute to the ATP site. Arg319 contributes to the L-glutamate binding site. An ADP-binding site is contributed by 336 to 338 (YFE). Position 338 (Glu338) interacts with Mn(2+). L-glutamate is bound at residue Arg340.

It belongs to the glutamine synthetase family. Homooctamer and homotetramer. The cofactor is biotin. Requires Mg(2+) as cofactor. Mn(2+) serves as cofactor. In terms of tissue distribution, expressed in retina, brain and liver. Little or no detectable expression in breast muscle, pancreas and spleen.

The protein localises to the cytoplasm. It is found in the mitochondrion. It carries out the reaction L-glutamate + NH4(+) + ATP = L-glutamine + ADP + phosphate + H(+). The enzyme catalyses L-glutamate + H(+) = 4-aminobutanoate + CO2. Its activity is regulated as follows. Glutamate to glutamine ratio influences catalytic activity. At glutamate to glutamine ratios greater than 4, decarboxylase activity ceases. In the presence of manganese, synthetase activity is limited to concentrations between 10 mM and 20 mM, whereas decarboxylase activity is not affected. Both catalytic activities are inhibited by avidin. Functionally, glutamine synthetase that catalyzes the ATP-dependent conversion of glutamate and ammonia to glutamine. When expressed in liver, it may be involved in detoxifying intramitochondrially generated ammonia. Also acts as glutamate decarboxylase by catalyzing the production of 4-aminobutanoate (gamma-aminobutyric acid, GABA) in a pyridoxal phosphate-independent manner. The chain is Glutamine synthetase from Gallus gallus (Chicken).